The chain runs to 451 residues: Multidrug export protein MepA (451 aa).

A run of 12 helical transmembrane segments spans residues 26-46 (MIGTLLSVIYGILNIYFIGFL), 54-74 (AISLTLPVFAILMGLGNLFGV), 97-117 (SFSIYGGIALGLIVILVTLPF), 139-159 (LKVMFLSAPFVILFFILEQFA), 170-190 (IGMLASVGLNIILDPILIFGF), 194-214 (VVGAALGTAISNVAAALFFII), 245-265 (IPAFLMSILMGFTGLVLNLFL), 282-302 (LVQFPELIIMGLCEGVVPLIA), 318-338 (AVIMSIGVIFVVCMIAVFTIG), 355-375 (ATFILKVTMASLLLNGIGFLF), 397-417 (AIIIPVLFIMNALFGLTGVIW), and 418-438 (SLLIAESLCALAAMLIVYLLR).

This sequence belongs to the multi antimicrobial extrusion (MATE) (TC 2.A.66.1) family. MepA subfamily.

The protein resides in the cell membrane. Functionally, multidrug resistance efflux protein. Contributes to resistance to the glycylcycline antibiotic tigecycline. This is Multidrug export protein MepA (mepA) from Staphylococcus aureus (strain N315).